A 148-amino-acid polypeptide reads, in one-letter code: Methylglyoxal synthase (148 aa).

The MGS-like domain occupies 4–148 (VSVPAIKRIV…LSYNTKVKKD (145 aa)). Residues histidine 17, lysine 21, 43-46 (TGTT), and 63-64 (SG) each bind substrate. Aspartate 69 functions as the Proton donor/acceptor in the catalytic mechanism. Histidine 96 contacts substrate.

It belongs to the methylglyoxal synthase family.

It catalyses the reaction dihydroxyacetone phosphate = methylglyoxal + phosphate. Its function is as follows. Catalyzes the formation of methylglyoxal from dihydroxyacetone phosphate. The polypeptide is Methylglyoxal synthase (Leptospira interrogans serogroup Icterohaemorrhagiae serovar copenhageni (strain Fiocruz L1-130)).